The following is a 488-amino-acid chain: Coiled-coil domain-containing protein 77 (488 aa).

The segment at 21 to 48 (GVAVSGPTKRRGMADSLESTPLPSPEDR) is disordered. Residue S36 is modified to Phosphoserine. K51 participates in a covalent cross-link: Glycyl lysine isopeptide (Lys-Gly) (interchain with G-Cter in SUMO2). Coiled-coil stretches lie at residues 55-118 (SKEL…QVCL) and 208-488 (KESS…LRLC). Residues 192–213 (FKADPKISKRRPSRERKESSEH) form a disordered region.

The sequence is that of Coiled-coil domain-containing protein 77 (CCDC77) from Homo sapiens (Human).